A 245-amino-acid polypeptide reads, in one-letter code: Small ribosomal subunit protein uS3 (245 aa).

The KH type-2 domain maps to 39–107 (IRKAIREKLK…EVRVNLVEIR (69 aa)). Positions 216-245 (DKRLETSGQSRARANTNQRGPASGAQAAGA) are disordered. Residues 221 to 235 (TSGQSRARANTNQRG) are compositionally biased toward polar residues.

It belongs to the universal ribosomal protein uS3 family. As to quaternary structure, part of the 30S ribosomal subunit. Forms a tight complex with proteins S10 and S14.

Its function is as follows. Binds the lower part of the 30S subunit head. Binds mRNA in the 70S ribosome, positioning it for translation. This Hyphomonas neptunium (strain ATCC 15444) protein is Small ribosomal subunit protein uS3.